Reading from the N-terminus, the 208-residue chain is Transcription factor atf-4 homolog (208 aa).

Disordered stretches follow at residues 18-47 (HNQT…YFNP) and 106-165 (ERRS…EKEE). Residues 110–120 (NSSASPASNWS) show a composition bias toward low complexity. Residues 121-141 (SDEHDSQSEKSYHPYKTPEKK) show a composition bias toward basic and acidic residues. A bZIP domain is found at 138-201 (PEKKERKKAQ…RYFKKFMTEM (64 aa)). A basic motif region spans residues 140-163 (KKERKKAQNRLAATRYREKKRREK). The interval 173 to 187 (LSVTNGKLKDQVSEL) is leucine-zipper.

This sequence belongs to the bZIP family.

It localises to the nucleus. Functionally, transcription factor. Involved in positively modulating longevity and stress tolerance, probably acting by positively regulating expression of transsulfuration enzyme cth-2, leading to increased hydrogen sulfide production and therefore increased protein persulfidation, a protective modification of redox-reactive cysteines. May mediate longevity and increased stress resistance induced by mTORC1 suppression. In Caenorhabditis elegans, this protein is Transcription factor atf-4 homolog.